The following is a 447-amino-acid chain: MDQTYSLESFLNHVQKRDPNQTEFAQAVREVMTTLWPFLEQNPKYRQMSLLERLVEPERVIQFRVVWVDDRNQIQVNRAWRVQFSSAIGPYKGGMRFHPSVNLSILKFLGFEQTFKNALTTLPMGGGKGGSDFDPKGKSEGEVMRFCQALMTELYRHLGADTDVPAGDIGVGGREVGFMAGMMKKLSNNTACVFTGKGLSFGGSLIRPEATGYGLVYFTEAMLKRHGMGFEGMRVSVSGSGNVAQYAIEKAMEFGARVITASDSSGTVVDESGFTKEKLARLIEIKASRDGRVADYAKEFGLVYLEGQQPWSLPVDIALPCATQNELDVDAAHQLIANGVKAVAEGANMPTTIEATELFQQAGVLFAPGKAANAGGVATSGLEMAQNAARLGWKAEKVDARLHHIMLDIHHACVEHGGEGEQTNYVQGANIAGFVKVADAMLAQGVI.

K92, Q113, and K116 together coordinate substrate. Catalysis depends on K128, which acts as the Proton donor. Substrate is bound at residue G167. NADP(+)-binding residues include T211 and N242. Substrate is bound at residue S380.

It belongs to the Glu/Leu/Phe/Val dehydrogenases family. In terms of assembly, homohexamer.

It carries out the reaction L-glutamate + NADP(+) + H2O = 2-oxoglutarate + NH4(+) + NADPH + H(+). Competitively inhibited by homoserine and by glutamine. Catalyzes the reversible oxidative deamination of glutamate to alpha-ketoglutarate and ammonia. The protein is NADP-specific glutamate dehydrogenase of Escherichia coli (strain K12).